Reading from the N-terminus, the 270-residue chain is Endochitinase PR4 (270 aa).

An N-terminal signal peptide occupies residues M1–A23. In terms of domain architecture, Chitin-binding type-1 spans Q24–T58. Disulfide bonds link C26–C34, C28–C40, C33–C47, C51–C56, C88–C137, C150–C160, and C238–C270. The Proton donor role is filled by E132.

This sequence belongs to the glycosyl hydrolase 19 family. Chitinase class I subfamily.

It catalyses the reaction Random endo-hydrolysis of N-acetyl-beta-D-glucosaminide (1-&gt;4)-beta-linkages in chitin and chitodextrins.. Its function is as follows. Defense against chitin-containing fungal pathogens. This Phaseolus vulgaris (Kidney bean) protein is Endochitinase PR4 (CHI4).